A 126-amino-acid chain; its full sequence is Glycine cleavage system H protein (126 aa).

The region spanning 22–104 (IAYVGITDYA…YGEGWLIKMK (83 aa)) is the Lipoyl-binding domain. N6-lipoyllysine is present on lysine 63.

The protein belongs to the GcvH family. As to quaternary structure, the glycine cleavage system is composed of four proteins: P, T, L and H. The cofactor is (R)-lipoate.

Its function is as follows. The glycine cleavage system catalyzes the degradation of glycine. The H protein shuttles the methylamine group of glycine from the P protein to the T protein. The protein is Glycine cleavage system H protein of Bacteroides thetaiotaomicron (strain ATCC 29148 / DSM 2079 / JCM 5827 / CCUG 10774 / NCTC 10582 / VPI-5482 / E50).